A 683-amino-acid chain; its full sequence is Probable potassium transport system protein Kup 1 (683 aa).

The next 12 membrane-spanning stretches (helical) occupy residues 13–33, 55–75, 98–118, 139–159, 168–188, 218–238, 251–271, 296–316, 345–365, 376–396, 401–421, and 426–446; these read GLLI…LYVM, ISLV…FIAL, WLVL…TLTP, VPVS…LLLF, IIGK…GVIG, AGIF…ALYS, SWPY…VWIL, LAAI…LITG, IYIP…VLFF, GLSI…WLAM, TIWN…FMLA, and FMHG…IMYV.

This sequence belongs to the HAK/KUP transporter (TC 2.A.72) family.

The protein localises to the cell membrane. The enzyme catalyses K(+)(in) + H(+)(in) = K(+)(out) + H(+)(out). In terms of biological role, transport of potassium into the cell. Likely operates as a K(+):H(+) symporter. This chain is Probable potassium transport system protein Kup 1, found in Lactobacillus johnsonii (strain CNCM I-12250 / La1 / NCC 533).